A 113-amino-acid chain; its full sequence is Cytochrome c2 (113 aa).

Heme c-binding residues include Cys-15, Cys-18, His-19, and Met-92.

Belongs to the cytochrome c family. Binds 1 heme c group covalently per subunit.

Cytochrome c2 is found mainly in purple, non-sulfur, photosynthetic bacteria where it functions as the electron donor to the oxidized bacteriochlorophyll in the photophosphorylation pathway. However, it may also have a role in the respiratory chain and is found in some non-photosynthetic bacteria. This is Cytochrome c2 from Pararhodospirillum photometricum (Rhodospirillum photometricum).